The chain runs to 332 residues: Monoterpene synthase 25 (332 aa).

Mg(2+)-binding residues include Asp-115, Glu-180, Asn-240, Ser-244, and Glu-248. Residues 115 to 121 carry the DDXXXXD motif motif; it reads DDPVVFD. An NSE/DTE motif motif is present at residues 240–248; it reads NDILSFYKE.

This sequence belongs to the trichodiene synthase family. Mg(2+) is required as a cofactor.

Its function is as follows. Terpene cyclase that catalyzes the cyclization of geranyl diphosphate (GPP) to myrcene and linalool. This chain is Monoterpene synthase 25, found in Postia placenta (strain ATCC 44394 / Madison 698-R) (Brown rot fungus).